Here is a 425-residue protein sequence, read N- to C-terminus: Enolase (425 aa).

A (2R)-2-phosphoglycerate-binding site is contributed by Q163. Residue E205 is the Proton donor of the active site. Residues D242, E285, and D312 each coordinate Mg(2+). (2R)-2-phosphoglycerate-binding residues include K337, R366, S367, and K388. The Proton acceptor role is filled by K337.

Belongs to the enolase family. Mg(2+) serves as cofactor.

Its subcellular location is the cytoplasm. It localises to the secreted. It is found in the cell surface. The catalysed reaction is (2R)-2-phosphoglycerate = phosphoenolpyruvate + H2O. Its pathway is carbohydrate degradation; glycolysis; pyruvate from D-glyceraldehyde 3-phosphate: step 4/5. Catalyzes the reversible conversion of 2-phosphoglycerate (2-PG) into phosphoenolpyruvate (PEP). It is essential for the degradation of carbohydrates via glycolysis. The chain is Enolase from Jannaschia sp. (strain CCS1).